The primary structure comprises 162 residues: UPF0305 protein MmarC6_0221 (162 aa).

Belongs to the UPF0305 family.

The chain is UPF0305 protein MmarC6_0221 from Methanococcus maripaludis (strain C6 / ATCC BAA-1332).